The primary structure comprises 279 residues: Small ribosomal subunit protein uS2 (279 aa).

The interval 255 to 279 (LLAGATTAAPEAAAGEAAAAPEQSS) is disordered.

The protein belongs to the universal ribosomal protein uS2 family.

This chain is Small ribosomal subunit protein uS2, found in Mycolicibacterium gilvum (strain PYR-GCK) (Mycobacterium gilvum (strain PYR-GCK)).